The chain runs to 204 residues: Terpene cyclase trt1 (204 aa).

Helical transmembrane passes span 44–64 (FMSI…YPIA), 67–87 (HWAG…FIVA), 103–122 (FARL…HLAL), 132–154 (FFWS…LVCR), and 169–189 (WFYI…FFYF).

Belongs to the paxB family.

The protein localises to the membrane. It functions in the pathway secondary metabolite biosynthesis; terpenoid biosynthesis. Terpene cyclase; part of the gene cluster that mediates the biosynthesis of terretonin, a fungal meroterpenoid that acts as a mycotoxin. The first step of the pathway is the synthesis of 3,5-dimethylorsellinic acid (DMOA) by the polyketide synthase trt4. DMOA is then prenylated into farnesyl-DMOA by the polyprenyl transferase trt2. Methylation by the methyltransferase trt5 then leads to farnesyl-DMOA methyl ester which is further subject to epoxidation by the FAD-dependent monooxygenase trt8 to yield epoxyfarnesyl-DMOA methyl ester. Cyclization of epoxyfarnesyl-DMOA methyl ester by the terpene cyclase trt1 leads to a tetracycle intermediate which is in turn converted to preterretonin. Dehydrogenase trt9 comes next to transform preterretonin to preterrenoid. The FAD-dependent monooxygenase trt3 is then required for the C-hydroxylation at C16 of preterrenoid to yield terrenoid. The cytochrome P450 trt6 catalyzes three successive oxidations to transform terrenoid into an unstable intermediate, which then undergoes the D-ring expansion and unusual rearrangement of the methoxy group to afford the core skeleton of terretonin. Trt14 catalyzes the D-ring expansion of terretonin involving intramolecular methoxy rearrangement as well as the hydrolysis of the expanded D-ring and the methyl ester moiety. Finally, the nonheme iron-dependent dioxygenase trt7 accomplishes the last two oxidation reactions steps to complete the biosynthesis of terretonin. Terretonin C is produced via spontaneous decarboxylation of the terretonin precursor. Another shunt product of the terretonin biosynthesis is dihydrofarnesyl-DMOA, derived from epoxyfarnesyl-DMOA through hydrolysis of the epoxide. The polypeptide is Terpene cyclase trt1 (Aspergillus terreus (strain NIH 2624 / FGSC A1156)).